The chain runs to 406 residues: CCA-adding enzyme (406 aa).

Residues G32 and R35 each contribute to the ATP site. Residues G32 and R35 each coordinate CTP. Positions 45 and 47 each coordinate Mg(2+). Residues R116, D159, R162, R165, and R168 each coordinate ATP. Positions 116, 159, 162, 165, and 168 each coordinate CTP.

Belongs to the tRNA nucleotidyltransferase/poly(A) polymerase family. Bacterial CCA-adding enzyme type 3 subfamily. As to quaternary structure, homodimer. The cofactor is Mg(2+).

The catalysed reaction is a tRNA precursor + 2 CTP + ATP = a tRNA with a 3' CCA end + 3 diphosphate. It carries out the reaction a tRNA with a 3' CCA end + 2 CTP + ATP = a tRNA with a 3' CCACCA end + 3 diphosphate. In terms of biological role, catalyzes the addition and repair of the essential 3'-terminal CCA sequence in tRNAs without using a nucleic acid template. Adds these three nucleotides in the order of C, C, and A to the tRNA nucleotide-73, using CTP and ATP as substrates and producing inorganic pyrophosphate. tRNA 3'-terminal CCA addition is required both for tRNA processing and repair. Also involved in tRNA surveillance by mediating tandem CCA addition to generate a CCACCA at the 3' terminus of unstable tRNAs. While stable tRNAs receive only 3'-terminal CCA, unstable tRNAs are marked with CCACCA and rapidly degraded. In Enterococcus faecalis (strain ATCC 700802 / V583), this protein is CCA-adding enzyme.